The following is a 133-amino-acid chain: Capsid protein (133 aa).

Belongs to the Leviviricetes capsid protein family. In terms of assembly, homodimer. The homodimers binds to the viral RNA via an operator hairpin, but also to many other RNA sequences in the viral genome; this interaction probably shifts the virus from the replicative to the assembly phase and ensures specific encapsidation of the viral genome. Interacts with the maturation protein A2.

The protein localises to the virion. Functionally, capsid protein self-assembles to form an icosahedral capsid with a T=3 symmetry, about 26 nm in diameter, and consisting of 89 capsid proteins dimers (178 capsid proteins). Involved in viral genome encapsidation through the interaction between a capsid protein dimer and the multiple packaging signals present in the RNA genome. Binding of the capsid proteins to the viral RNA induces a conformational change required for efficient T=3 shell formation. The capsid also contains 1 copy of the A2 maturation protein. Acts as a translational repressor of viral replicase synthesis late in infection. This latter function is the result of capsid protein interaction with an RNA hairpin which contains the replicase ribosome-binding site. This Escherichia virus Qbeta (Bacteriophage Q-beta) protein is Capsid protein.